Reading from the N-terminus, the 235-residue chain is Large ribosomal subunit protein uL1 (235 aa).

Belongs to the universal ribosomal protein uL1 family. As to quaternary structure, part of the 50S ribosomal subunit.

Binds directly to 23S rRNA. The L1 stalk is quite mobile in the ribosome, and is involved in E site tRNA release. Functionally, protein L1 is also a translational repressor protein, it controls the translation of the L11 operon by binding to its mRNA. The protein is Large ribosomal subunit protein uL1 of Arthrobacter sp. (strain FB24).